A 97-amino-acid polypeptide reads, in one-letter code: U6-theraphotoxin-Hhn1a 1 (97 aa).

The signal sequence occupies residues 1–33; sequence MLIKQFSRRSKNMKVQILLAFAALFVLAVGSYA. Positions 34 to 61 are excised as a propeptide; sequence SESKKLDLRDALFSAMFSADYQLNPQER. Disulfide bonds link C63-C77, C70-C82, and C76-C89.

The protein belongs to the neurotoxin 10 (Hwtx-1) family. 12 (Hntx-12) subfamily. In terms of tissue distribution, expressed by the venom gland.

It localises to the secreted. Functionally, ion channel inhibitor. The protein is U6-theraphotoxin-Hhn1a 1 of Cyriopagopus hainanus (Chinese bird spider).